The following is a 142-amino-acid chain: Transcriptional regulator MraZ (142 aa).

SpoVT-AbrB domains follow at residues Ala-5 to Glu-51 and Ala-77 to Thr-120.

It belongs to the MraZ family. As to quaternary structure, forms oligomers.

The protein resides in the cytoplasm. It is found in the nucleoid. The protein is Transcriptional regulator MraZ of Cupriavidus pinatubonensis (strain JMP 134 / LMG 1197) (Cupriavidus necator (strain JMP 134)).